Here is a 284-residue protein sequence, read N- to C-terminus: uncharacterized protein (284 aa).

Residues 1–24 (MLYSRESRTTVLFLALVTSLTVLC) form the signal peptide. Over 25-84 (HSVDVTTVFTTSTITEITTVTAAPQPQNKAETALNTATNIIQTMQFLFNCAPFKWKGPLK) the chain is Cytoplasmic. The chain crosses the membrane as a helical span at residues 85-104 (ITSCALNFIVLLLTAWGYLL). The Extracellular segment spans residues 105 to 284 (KYLQENKLNS…SVHMYSSSLL (180 aa)). N270 carries N-linked (GlcNAc...) asparagine glycosylation.

It to yeast YNL033w.

It localises to the cell membrane. This is an uncharacterized protein from Saccharomyces cerevisiae (strain ATCC 204508 / S288c) (Baker's yeast).